The primary structure comprises 502 residues: NAD(P)H-quinone oxidoreductase chain 4, chloroplastic (502 aa).

The next 14 helical transmembrane spans lie at 4–24 (FPWL…IFFL), 37–57 (ISIC…HFQL), 87–107 (LGSI…AWPV), 113–130 (LFYF…GLFS), 134–154 (LLLF…LLSM), 167–187 (FILY…GMGL), 213–233 (ILLY…IPLH), 244–264 (HYST…YGLI), 274–294 (AHYL…IYAA), 315–335 (MGFI…GAIL), 336–356 (QILS…TASD), 388–408 (LALP…GLIT), 419–439 (LITF…LSML), and 464–484 (LFIL…PDFV).

Belongs to the complex I subunit 4 family.

It is found in the plastid. The protein localises to the chloroplast thylakoid membrane. It catalyses the reaction a plastoquinone + NADH + (n+1) H(+)(in) = a plastoquinol + NAD(+) + n H(+)(out). The enzyme catalyses a plastoquinone + NADPH + (n+1) H(+)(in) = a plastoquinol + NADP(+) + n H(+)(out). In Lolium perenne (Perennial ryegrass), this protein is NAD(P)H-quinone oxidoreductase chain 4, chloroplastic.